A 420-amino-acid chain; its full sequence is MQLLAFGVNHKTASVAIREQITFAPERLPSALTELVNRSGAKEAAILSTCNRTELYCGCAPGQQEAVIEWLRQYHGMEPKILETCLYTHPDHSAVRHLLRVASGLDSMVLGEPQILGQIKAAYSYGLEAGTIGRVLGRLFQHTFYVAKQVRTDTAIGTSPISVAFAAVSLAKQIFGDLESTTAFLIGAGETIELAARHLFTNGVGHIIVANRNLDKAYQLANQFNGYAIPLAEMPKHLSEADIVISSTGSQLPILGKGTVERALRIRKHRPIFMVDIAVPRDIEPEVGELQDIYLYNVDDLQEVVQENLRSRQAAALQAEEIIDTQVEYFMDWVRTQDAVPVICAVRQEADQLRKEALEKARRRLAQGHDPNEVLTMLAHNLTNKLMHVPTRQLRSLGATGDELALQAALKIFDVDHFKA.

Substrate is bound by residues 49–52 (TCNR), Ser107, 112–114 (EPQ), and Gln118. Cys50 (nucleophile) is an active-site residue. NADP(+) is bound at residue 187–192 (GAGETI).

The protein belongs to the glutamyl-tRNA reductase family. In terms of assembly, homodimer.

It catalyses the reaction (S)-4-amino-5-oxopentanoate + tRNA(Glu) + NADP(+) = L-glutamyl-tRNA(Glu) + NADPH + H(+). It functions in the pathway porphyrin-containing compound metabolism; protoporphyrin-IX biosynthesis; 5-aminolevulinate from L-glutamyl-tRNA(Glu): step 1/2. In terms of biological role, catalyzes the NADPH-dependent reduction of glutamyl-tRNA(Glu) to glutamate 1-semialdehyde (GSA). The sequence is that of Glutamyl-tRNA reductase from Nitrosococcus oceani (strain ATCC 19707 / BCRC 17464 / JCM 30415 / NCIMB 11848 / C-107).